Consider the following 56-residue polypeptide: FAPVNVDCSDHPKPACLQEQKPLCGSDNKTYDNKCSFCNAVVDSNGTLTLSHFGKC.

Residues V6 to C56 form the Kazal-like domain. Disulfide bonds link C8/C38, C16/C35, and C24/C56. The N-linked (GlcNAc...) asparagine glycan is linked to N45.

The protein localises to the secreted. This Penelope jacquacu (Spix's guan) protein is Ovomucoid.